A 201-amino-acid chain; its full sequence is Small ribosomal subunit protein uS4 (201 aa).

The interval 1–45 (MARYTGPLTKKSRRLGTDLVGNDKSFERRPYPPGVHGRGRTKDSE) is disordered. Positions 91 to 157 (SRLDNVVYRA…PPIVIARETF (67 aa)) constitute an S4 RNA-binding domain.

This sequence belongs to the universal ribosomal protein uS4 family. Part of the 30S ribosomal subunit. Contacts protein S5. The interaction surface between S4 and S5 is involved in control of translational fidelity.

Functionally, one of the primary rRNA binding proteins, it binds directly to 16S rRNA where it nucleates assembly of the body of the 30S subunit. With S5 and S12 plays an important role in translational accuracy. This Cutibacterium acnes (strain DSM 16379 / KPA171202) (Propionibacterium acnes) protein is Small ribosomal subunit protein uS4.